Here is a 174-residue protein sequence, read N- to C-terminus: MLTLIQGKKIVNDLRSRLAFEYNGQLIKILSKNIVAVGSLRREEKMLNDVDLLIIVPEKKLLKHVLPNIRIKDFSFSIKVCGERKCVLFIEWKKNTYQLDLFTALAEEKPYAVLHFTGPVSYLIRIRAALKKKNYKLNQYGLFKNQTLVPLKITTEKELIKELGFTYRIPKKRL.

The segment at 42-51 (REEKMLNDVD) is involved in ssDNA binding. Residues Asp49 and Asp51 each coordinate Mg(2+). Cys81 and Cys86 are joined by a disulfide. Asp100 provides a ligand contact to Mg(2+).

The protein belongs to the DNA polymerase type-X family. The cofactor is Mg(2+).

Its subcellular location is the virion. The catalysed reaction is DNA(n) + a 2'-deoxyribonucleoside 5'-triphosphate = DNA(n+1) + diphosphate. Its function is as follows. Error-prone polymerase lacking a proofreading 3'-5' exonuclease which catalyzes the gap-filling reaction during the DNA repair process. Specifically binds intermediates in the single-nucleotide base-excision repair process. Also catalyzes DNA polymerization with low nucleotide-insertion fidelity. Probably acts as a strategic DNA mutase, which gives rise to a rapid emergence of variants. Generates mismatched G-G pairs, in that case, the polymerase first binds the deoxynucleotide followed by mismatch formation. Together with the viral DNA ligase, fills the single nucleotide gaps generated by the AP endonuclease. Binds DNA with high affinity via the helix alphaE. The chain is Repair DNA polymerase X from Ornithodoros (relapsing fever ticks).